A 178-amino-acid chain; its full sequence is Inorganic pyrophosphatase (178 aa).

Positions 29, 43, and 55 each coordinate substrate. Asp65, Asp70, and Asp102 together coordinate Mg(2+). Tyr141 is a binding site for substrate.

Belongs to the PPase family. Homohexamer. Mg(2+) serves as cofactor.

Its subcellular location is the cytoplasm. It carries out the reaction diphosphate + H2O = 2 phosphate + H(+). Its function is as follows. Catalyzes the hydrolysis of inorganic pyrophosphate (PPi) forming two phosphate ions. This chain is Inorganic pyrophosphatase, found in Rickettsia typhi (strain ATCC VR-144 / Wilmington).